A 222-amino-acid chain; its full sequence is MAGFKVAIDGPAGSGKSSISKNVAHKLGMTHIDTGAMYRAVTLLAIENQIDMNDESQYRFLEDVQITYRDDHIYIGDRIVEKEIRSKAVTDHVSLVSSFPYVRKKLVEIQQKLGETNNIIMDGRDIGTVVLPDADLKIFLIADVRERAKRRQQDKQNQGYEVDIEKLIEEITRRDQLDSQRKISPLKKAEDAIVVDSTHMSLQQTVKKIIELIQSAKGVINE.

An ATP-binding site is contributed by 10–18 (GPAGSGKSS).

Belongs to the cytidylate kinase family. Type 1 subfamily.

It localises to the cytoplasm. The enzyme catalyses CMP + ATP = CDP + ADP. It catalyses the reaction dCMP + ATP = dCDP + ADP. This is Cytidylate kinase from Acholeplasma laidlawii (strain PG-8A).